The primary structure comprises 292 residues: 4-hydroxybenzoate octaprenyltransferase (292 aa).

A run of 8 helical transmembrane segments spans residues 23–43 (PIGI…AGEG), 47–67 (PGVA…GCVI), 98–118 (LILF…MNWL), 141–161 (HLPQ…TFAA), 164–184 (GSIP…ALIY), 211–231 (YDRE…AGIG), 233–253 (YLGL…FSVY), and 270–290 (FLNN…DYLW).

Belongs to the UbiA prenyltransferase family. Mg(2+) serves as cofactor.

The protein resides in the cell inner membrane. It carries out the reaction all-trans-octaprenyl diphosphate + 4-hydroxybenzoate = 4-hydroxy-3-(all-trans-octaprenyl)benzoate + diphosphate. Its pathway is cofactor biosynthesis; ubiquinone biosynthesis. Its function is as follows. Catalyzes the prenylation of para-hydroxybenzoate (PHB) with an all-trans polyprenyl group. Mediates the second step in the final reaction sequence of ubiquinone-8 (UQ-8) biosynthesis, which is the condensation of the polyisoprenoid side chain with PHB, generating the first membrane-bound Q intermediate 3-octaprenyl-4-hydroxybenzoate. In Methylococcus capsulatus (strain ATCC 33009 / NCIMB 11132 / Bath), this protein is 4-hydroxybenzoate octaprenyltransferase.